Here is a 64-residue protein sequence, read N- to C-terminus: Putative H/ACA ribonucleoprotein complex subunit 3 (64 aa).

This sequence belongs to the NOP10 family. As to quaternary structure, component of the small nucleolar ribonucleoprotein particles containing H/ACA-type snoRNAs (H/ACA snoRNPs).

Its subcellular location is the nucleus. The protein resides in the nucleolus. Required for ribosome biogenesis. Part of a complex which catalyzes pseudouridylation of rRNA. This involves the isomerization of uridine such that the ribose is subsequently attached to C5, instead of the normal N1. Pseudouridine ('psi') residues may serve to stabilize the conformation of rRNAs. This Caenorhabditis elegans protein is Putative H/ACA ribonucleoprotein complex subunit 3 (nola-3).